Consider the following 87-residue polypeptide: Acylphosphatase (87 aa).

The 86-residue stretch at 2–87 folds into the Acylphosphatase-like domain; it reads RLTALVSGTV…ATGLRDFHVY (86 aa). Residues Arg-17 and Asn-35 contribute to the active site.

This sequence belongs to the acylphosphatase family.

It catalyses the reaction an acyl phosphate + H2O = a carboxylate + phosphate + H(+). This Deinococcus geothermalis (strain DSM 11300 / CIP 105573 / AG-3a) protein is Acylphosphatase (acyP).